The primary structure comprises 332 residues: L-lactate dehydrogenase A chain (332 aa).

N-acetylalanine is present on alanine 2. An N6-acetyllysine; alternate modification is found at lysine 5. Position 5 is an N6-succinyllysine; alternate (lysine 5). Lysine 14 carries the N6-acetyllysine modification. A Phosphothreonine modification is found at threonine 18. Residue 29–57 (GAVGMACAISILMKDLADELALVDVIEDK) coordinates NAD(+). Position 57 is an N6-acetyllysine; alternate (lysine 57). Lysine 57 is covalently cross-linked (Glycyl lysine isopeptide (Lys-Gly) (interchain with G-Cter in SUMO2); alternate). Lysine 81 carries the N6-acetyllysine modification. Arginine 99 is a binding site for NAD(+). Arginine 106 is a substrate binding site. Residue lysine 118 is modified to N6-acetyllysine; alternate. The residue at position 118 (lysine 118) is an N6-succinyllysine; alternate. Lysine 126 is modified (N6-acetyllysine). Residue asparagine 138 participates in NAD(+) binding. Positions 138 and 169 each coordinate substrate. Histidine 193 functions as the Proton acceptor in the catalytic mechanism. An N6-acetyllysine mark is found at lysine 224 and lysine 232. Tyrosine 239 is modified (phosphotyrosine). Lysine 243 bears the N6-acetyllysine mark. Threonine 248 contributes to the substrate binding site. Phosphothreonine is present on threonine 309. An N6-acetyllysine; alternate modification is found at lysine 318. Lysine 318 carries the post-translational modification N6-succinyllysine; alternate. The residue at position 322 (threonine 322) is a Phosphothreonine.

This sequence belongs to the LDH/MDH superfamily. LDH family. As to quaternary structure, homotetramer. Interacts with PTEN upstream reading frame protein MP31. ISGylated.

It localises to the cytoplasm. It catalyses the reaction (S)-lactate + NAD(+) = pyruvate + NADH + H(+). The protein operates within fermentation; pyruvate fermentation to lactate; (S)-lactate from pyruvate: step 1/1. In terms of biological role, interconverts simultaneously and stereospecifically pyruvate and lactate with concomitant interconversion of NADH and NAD(+). The polypeptide is L-lactate dehydrogenase A chain (LDHA) (Macaca fascicularis (Crab-eating macaque)).